The primary structure comprises 955 residues: Leucine--tRNA ligase (955 aa).

The short motif at 51-61 (PYLNGVLHAGH) is the 'HIGH' region element. The 'KMSKS' region motif lies at 647–651 (KLSKS). Position 650 (K650) interacts with ATP.

The protein belongs to the class-I aminoacyl-tRNA synthetase family.

It localises to the cytoplasm. The enzyme catalyses tRNA(Leu) + L-leucine + ATP = L-leucyl-tRNA(Leu) + AMP + diphosphate. This chain is Leucine--tRNA ligase, found in Methanococcus maripaludis (strain DSM 14266 / JCM 13030 / NBRC 101832 / S2 / LL).